The sequence spans 409 residues: G2/mitotic-specific cyclin-B (409 aa).

Belongs to the cyclin family. Cyclin AB subfamily. As to quaternary structure, interacts with the CDK1 protein kinase to form a serine/threonine kinase holoenzyme complex also known as maturation promoting factor (MPF). The cyclin subunit imparts substrate specificity to the complex.

In terms of biological role, essential for the control of the cell cycle at the G2/M (mitosis) transition. This is G2/mitotic-specific cyclin-B from Arbacia punctulata (Punctuate sea urchin).